The following is a 658-amino-acid chain: UvrABC system protein B (658 aa).

The region spanning 25 to 414 is the Helicase ATP-binding domain; that stretch reads KSLKNNNHYQ…LSKKNVAEQI (390 aa). Residue 38–45 coordinates ATP; it reads GVTGSGKT. A Beta-hairpin motif is present at residues 91-114; it reads HFDYYQPESYIPRRDLFIEKDSSI. The 175-residue stretch at 433 to 607 folds into the Helicase C-terminal domain; sequence QVQDLFDEIK…ELKLRDDEIR (175 aa). Residues 623 to 658 enclose the UVR domain; the sequence is EKIIKELDKKMRECTKNLDFEEAMRLRDEIAQLRTL.

This sequence belongs to the UvrB family. As to quaternary structure, forms a heterotetramer with UvrA during the search for lesions. Interacts with UvrC in an incision complex.

Its subcellular location is the cytoplasm. Its function is as follows. The UvrABC repair system catalyzes the recognition and processing of DNA lesions. A damage recognition complex composed of 2 UvrA and 2 UvrB subunits scans DNA for abnormalities. Upon binding of the UvrA(2)B(2) complex to a putative damaged site, the DNA wraps around one UvrB monomer. DNA wrap is dependent on ATP binding by UvrB and probably causes local melting of the DNA helix, facilitating insertion of UvrB beta-hairpin between the DNA strands. Then UvrB probes one DNA strand for the presence of a lesion. If a lesion is found the UvrA subunits dissociate and the UvrB-DNA preincision complex is formed. This complex is subsequently bound by UvrC and the second UvrB is released. If no lesion is found, the DNA wraps around the other UvrB subunit that will check the other stand for damage. In Helicobacter pylori (strain ATCC 700392 / 26695) (Campylobacter pylori), this protein is UvrABC system protein B.